The chain runs to 185 residues: Ribosome-recycling factor (185 aa).

This sequence belongs to the RRF family.

It localises to the cytoplasm. Its function is as follows. Responsible for the release of ribosomes from messenger RNA at the termination of protein biosynthesis. May increase the efficiency of translation by recycling ribosomes from one round of translation to another. The polypeptide is Ribosome-recycling factor (Halorhodospira halophila (strain DSM 244 / SL1) (Ectothiorhodospira halophila (strain DSM 244 / SL1))).